The sequence spans 95 residues: MTKSELIEKLATRQSQLSAKEVESAVKEMLEQMATTLESGERIEIRGFGSFSLHYRAPRTGRNPKTGTSVELEGKYVPHFKPGKELRERVDAVNV.

This sequence belongs to the bacterial histone-like protein family. In terms of assembly, heterodimer of an alpha and a beta chain.

In terms of biological role, this protein is one of the two subunits of integration host factor, a specific DNA-binding protein that functions in genetic recombination as well as in transcriptional and translational control. The polypeptide is Integration host factor subunit beta (Shewanella amazonensis (strain ATCC BAA-1098 / SB2B)).